The sequence spans 406 residues: Vacuole membrane protein 1 (406 aa).

Basic and acidic residues predominate over residues 1–21; the sequence is MAENGKNCDQRRVAMNKEHHN. The disordered stretch occupies residues 1 to 35; it reads MAENGKNCDQRRVAMNKEHHNGNFTDPSSVNEKKR. Ala2 carries the post-translational modification N-acetylalanine. Over 2–43 the chain is Cytoplasmic; it reads AENGKNCDQRRVAMNKEHHNGNFTDPSSVNEKKRREREERQN. The helical transmembrane segment at 44–64 threads the bilayer; sequence IVLWRQPLITLQYFSLEILVI. The Extracellular segment spans residues 65-77; that stretch reads LKEWTSKLWHRQS. A helical transmembrane segment spans residues 78 to 98; that stretch reads IVVSFLLLLAVLIATYYVEGV. Topologically, residues 99-109 are cytoplasmic; it reads HQQYVQRIEKQ. Residues 110–130 traverse the membrane as a helical segment; that stretch reads FLLYAYWIGLGILSSVGLGTG. Over 131-250 the chain is Extracellular; sequence LHTFLLYLGP…ASRAKLAVQK (120 aa). The tract at residues 173–316 is VTT domain; the sequence is GTEGTISLWS…FVIITFSKHI (144 aa). The helical transmembrane segment at 251 to 271 threads the bilayer; sequence LVQKVGFFGILACASIPNPLF. The Cytoplasmic segment spans residues 272–273; sequence DL. Residues 274 to 294 form a helical membrane-spanning segment; it reads AGITCGHFLVPFWTFFGATLI. Over 295-305 the chain is Extracellular; it reads GKAIIKMHIQK. A helical membrane pass occupies residues 306–326; that stretch reads IFVIITFSKHIVEQMVAFIGA. Topologically, residues 327–363 are cytoplasmic; it reads VPGIGPSLQKPFQEYLEAQRQKLHHKSEMGTPQGENW. A helical transmembrane segment spans residues 364-384; that stretch reads LSWMFEKLVVVMVCYFILSII. The Extracellular segment spans residues 385 to 406; it reads NSMAQSYAKRIQQRLNSEEKTK.

The protein belongs to the VMP1 family. In terms of assembly, interacts with BECN1. Interacts with TJP1. Interacts with TP53INP2. Interacts with TMEM41B. Interacts with ATP2A2, PLN and SLN; competes with PLN and SLN to prevent them from forming an inhibitory complex with ATP2A2. Interacts with ATG2A.

The protein localises to the endoplasmic reticulum-Golgi intermediate compartment membrane. Its subcellular location is the cell membrane. It localises to the vacuole membrane. The protein resides in the endoplasmic reticulum membrane. It carries out the reaction a 1,2-diacyl-sn-glycero-3-phospho-L-serine(in) = a 1,2-diacyl-sn-glycero-3-phospho-L-serine(out). The catalysed reaction is cholesterol(in) = cholesterol(out). The enzyme catalyses a 1,2-diacyl-sn-glycero-3-phosphocholine(in) = a 1,2-diacyl-sn-glycero-3-phosphocholine(out). It catalyses the reaction a 1,2-diacyl-sn-glycero-3-phosphoethanolamine(in) = a 1,2-diacyl-sn-glycero-3-phosphoethanolamine(out). Its function is as follows. Phospholipid scramblase involved in lipid homeostasis and membrane dynamics processes. Has phospholipid scramblase activity toward cholesterol and phosphatidylserine, as well as phosphatidylethanolamine and phosphatidylcholine. Required for autophagosome formation: participates in early stages of autophagosome biogenesis at the endoplasmic reticulum (ER) membrane by reequilibrating the leaflets of the ER as lipids are extracted by ATG2 (ATG2A or ATG2B) to mediate autophagosome assembly. Regulates ATP2A2 activity to control ER-isolation membrane contacts for autophagosome formation. In addition to autophagy, involved in other processes in which phospholipid scramblase activity is required. Modulates ER contacts with lipid droplets, mitochondria and endosomes. Plays an essential role in formation of cell junctions. Upon stress such as bacterial and viral infection, promotes formation of cytoplasmic vacuoles followed by cell death. Involved in the cytoplasmic vacuolization of acinar cells during the early stage of acute pancreatitis. In terms of biological role, (Microbial infection) Host factor required for infection by all flaviviruses tested such as Zika virus and Yellow fever virus. Probably required post-entry of the virus to facilitate the ER membrane remodeling necessary to form replication organelles. The sequence is that of Vacuole membrane protein 1 from Homo sapiens (Human).